We begin with the raw amino-acid sequence, 1720 residues long: 6-methylcalicylic acide synthase (1720 aa).

The disordered stretch occupies residues 1–31 (MDKQSASGEIPAMRWEPYHRRDPRNAKELSK). The Ketosynthase family 3 (KS3) domain occupies 1–399 (MDKQSASGEI…GTVSHAVIEQ (399 aa)). A compositionally biased stretch (basic and acidic residues) spans 16 to 30 (EPYHRRDPRNAKELS). Active-site for beta-ketoacyl synthase activity residues include Cys-146, His-281, and His-321. The segment at 509 to 823 (VWVFSGHGAQ…IAQLHCRGAE (315 aa)) is malonyl-CoA:ACP transacylase (MAT) domain. Residues 868–987 (HTLLGQRIGI…AYWARDIQEA (120 aa)) form an N-terminal hotdog fold region. Positions 868 to 1139 (HTLLGQRIGI…FTAMRFSEIE (272 aa)) are dehydratase (DH) domain. Residues 868–1144 (HTLLGQRIGI…FSEIEGTPGV (277 aa)) form the PKS/mFAS DH domain. His-900 functions as the Proton acceptor; for dehydratase activity in the catalytic mechanism. The interval 1001–1144 (GTRIRDDFSI…FSEIEGTPGV (144 aa)) is C-terminal hotdog fold. Asp-1065 serves as the catalytic Proton donor; for dehydratase activity. The interval 1148-1545 (MESLVHQLAW…AVAVQWTSWR (398 aa)) is product template (PT) domain. The region spanning 1644–1718 (VYLDEKIRGC…HLVGWFAEKV (75 aa)) is the Carrier domain. O-(pantetheine 4'-phosphoryl)serine is present on Ser-1678.

Its subcellular location is the cytoplasm. It is found in the cytosol. The catalysed reaction is 3 malonyl-CoA + acetyl-CoA + NADPH + 3 H(+) = 6-methylsalicylate + 3 CO2 + NADP(+) + 4 CoA + H2O. It functions in the pathway mycotoxin biosynthesis; patulin biosynthesis. In terms of biological role, 6-methylsalicylic acid synthase; part of the gene cluster that mediates the biosynthesis of patulin, an acetate-derived tetraketide mycotoxin produced by several fungal species that shows antimicrobial properties against several bacteria. PatK catalyzes the first step of the pathway which is the synthesis of 6-methylsalicylic acid via condensation of 1 acetate and 3 malonate units. The pathway begins with the synthesis of 6-methylsalicylic acid by the polyketide synthase (PKS) patK via condensation of acetate and malonate units. The 6-methylsalicylic acid decarboxylase patG then catalyzes the decarboxylation of 6-methylsalicylic acid to yield m-cresol (also known as 3-methylphenol). These first reactions occur in the cytosol. The intermediate m-cresol is then transported into the endoplasmic reticulum where the cytochrome P450 monooxygenase patH converts it to m-hydroxybenzyl alcohol, which is further converted to gentisyl alcohol by the cytochrome P450 monooxygenase patI. The oxidoreductases patJ and patO further convert gentisyl alcohol to isoepoxydon in the vacuole. PatN catalyzes then the transformation of isoepoxydon into phyllostine. The cluster protein patF is responsible for the conversion from phyllostine to neopatulin whereas the alcohol dehydrogenase patD converts neopatulin to E-ascladiol. The steps between isoepoxydon and E-ascladiol occur in the cytosol, and E-ascladiol is probably secreted to the extracellular space by one of the cluster-specific transporters patC or patM. Finally, the secreted patulin synthase patE catalyzes the conversion of E-ascladiol to patulin. The protein is 6-methylcalicylic acide synthase of Aspergillus clavatus (strain ATCC 1007 / CBS 513.65 / DSM 816 / NCTC 3887 / NRRL 1 / QM 1276 / 107).